We begin with the raw amino-acid sequence, 326 residues long: Apoptosis facilitator Bcl-2-like protein 14 (326 aa).

Ser-44 is modified (phosphoserine). The tract at residues 100–147 (AEKEEDSQSSPPEICAQAQRSGVPQARPRSPKWPRSRSSMDQRLEHKA) is disordered. Basic and acidic residues predominate over residues 137 to 147 (SSMDQRLEHKA). Residues 211–225 (IVELLKYSGEQLERE) carry the BH3 motif. The BH2 motif lies at 307 to 314 (WIQQHGGW).

The protein belongs to the Bcl-2 family. In terms of processing, phosphorylated by MELK, leading to inhibit its pro-apoptotic function.

It localises to the cytoplasm. Its function is as follows. Plays a role in apoptosis. This Bos taurus (Bovine) protein is Apoptosis facilitator Bcl-2-like protein 14 (BCL2L14).